The sequence spans 236 residues: Small ribosomal subunit protein bS21m (236 aa).

Positions 65–136 (KPAAGAAAGG…SSKPSPMQTW (72 aa)) are disordered. Over residues 107–131 (SNSSTSSSSSSSSSGGALYSSSKPS) the composition is skewed to low complexity.

This sequence belongs to the bacterial ribosomal protein bS21 family. Component of the mitochondrial small ribosomal subunit (mt-SSU). Mature N.crassa 74S mitochondrial ribosomes consist of a small (37S) and a large (54S) subunit. The 37S small subunit contains a 16S ribosomal RNA (16S mt-rRNA) and 32 different proteins. The 54S large subunit contains a 23S rRNA (23S mt-rRNA) and 42 different proteins.

Its subcellular location is the mitochondrion. Its function is as follows. Component of the mitochondrial ribosome (mitoribosome), a dedicated translation machinery responsible for the synthesis of mitochondrial genome-encoded proteins, including at least some of the essential transmembrane subunits of the mitochondrial respiratory chain. The mitoribosomes are attached to the mitochondrial inner membrane and translation products are cotranslationally integrated into the membrane. This is Small ribosomal subunit protein bS21m (mrp21) from Neurospora crassa (strain ATCC 24698 / 74-OR23-1A / CBS 708.71 / DSM 1257 / FGSC 987).